We begin with the raw amino-acid sequence, 230 residues long: Small ribosomal subunit protein uS7B (230 aa).

The interval 1–22 (MSEEVVESSSQEASQVIPQEQE) is disordered. Residues 7–16 (ESSSQEASQV) are compositionally biased toward low complexity.

The protein belongs to the universal ribosomal protein uS7 family.

In Drosophila melanogaster (Fruit fly), this protein is Small ribosomal subunit protein uS7B (RpS5b).